We begin with the raw amino-acid sequence, 199 residues long: MAFELPNLPYGFDALEPHIDKQTMEIHHDKHHNTYVTKLNAAVEGTDLESKSIEEIVANLDSVPENIQTAVRNNGGGHLNHSLFWELLTPNSEEKGTVVDKIKEQWGSLDAFKEEFADKAAARFGSGWAWLVVNNGNLEIVTTPNQDNPLTEGKTPILGLDVWEHAYYLKYQNKRPDYISAFWNVVNWEKVDELYNAAK.

Residues histidine 27, histidine 81, aspartate 161, and histidine 165 each coordinate Fe(3+). Mn(2+)-binding residues include histidine 27, histidine 81, aspartate 161, and histidine 165.

This sequence belongs to the iron/manganese superoxide dismutase family. As to quaternary structure, homodimer. Requires Mn(2+) as cofactor. Fe(3+) serves as cofactor.

It catalyses the reaction 2 superoxide + 2 H(+) = H2O2 + O2. In terms of biological role, destroys superoxide anion radicals which are normally produced within the cells and which are toxic to biological systems. Catalyzes the dismutation of superoxide anion radicals into O2 and H2O2 by successive reduction and oxidation of the transition metal ion at the active site. The sequence is that of Superoxide dismutase [Mn/Fe] (sodA) from Staphylococcus saprophyticus subsp. saprophyticus (strain ATCC 15305 / DSM 20229 / NCIMB 8711 / NCTC 7292 / S-41).